The chain runs to 670 residues: Protein ACCELERATED CELL DEATH 6 (670 aa).

The Cytoplasmic portion of the chain corresponds to 1 to 456; sequence MDSSGADLDR…PNYIFHERWT (456 aa). The tract at residues 18–47 is disordered; the sequence is LVSHDQRKDFSHSGGVGTTSPTGDTEPVPK. ANK repeat units lie at residues 66-95, 100-129, 134-163, 182-211, 216-248, 260-290, 295-325, 329-358, 363-391, and 399-428; these read EMTP…PMER, TGDS…CLLF, SRQT…SALA, DGNT…DAPF, KGIS…NVDR, QGNK…SLMD, DGRT…GVYV, DGSF…ASKY, LGQN…DTKH, and DGNT…EILK. The helical transmembrane segment at 457-477 threads the bilayer; the sequence is LALLLYAIHSSGFESVKSLTI. The Extracellular segment spans residues 478 to 492; the sequence is QSVPLDPKKNRHYVN. Residues 493–513 traverse the membrane as a helical segment; sequence ALLVVAALVATVTFAAGFTIP. Over 514–537 the chain is Cytoplasmic; it reads GGYISDSKKPNLGRATLATNPTLF. A helical membrane pass occupies residues 538 to 558; that stretch reads IFLLFDILAMQSSVATICTLI. At 559–577 the chain is on the extracellular side; it reads WAQLGDLALILKSLHVALP. The helical transmembrane segment at 578–598 threads the bilayer; it reads LLLFSLLCMPVAFLFGVITAI. Residues 599–602 are Cytoplasmic-facing; the sequence is AHVK. A helical transmembrane segment spans residues 603 to 623; that stretch reads WLLVTISIISGGFFLFAIFIL. Over 624–638 the chain is Extracellular; sequence GPHVMLQRSHLPPSS. The helical transmembrane segment at 639-659 threads the bilayer; that stretch reads GIFLKTFMLTIDISELFVILI. Topologically, residues 660-670 are cytoplasmic; it reads KACFGCVACSE.

In terms of assembly, component of large complexes containing, at least, FLS2, HSP70 and ACD6 in endoplasmic reticulum, plasma membrane and soluble fraction. Associated with HSP70 proteins during endoplasmic reticulum-associated degradation (ERAD). Reduced complex levels upon benzothiazole (BTH) treatment. Ubiquitinated. In terms of tissue distribution, basal expression requires light and salicylic acid (SA).

The protein resides in the cell membrane. It localises to the endoplasmic reticulum membrane. Dose-dependent activator of the defense response against virulent pathogens, including bacteria, fungi and oomycetes, that acts in a positive feedback loop with the defense signal salicylic acid (SA). Regulates the salicylic acid (SA) signaling pathway leading to cell death and modulating cell fate (e.g. cell enlargement and/or cell division). In response to SA signaling, triggers the accumulation of FLS2 at the plasma membrane, thus priming defenses. Involved in SA-dependent freezing signaling and tolerance. This Arabidopsis thaliana (Mouse-ear cress) protein is Protein ACCELERATED CELL DEATH 6.